The following is a 555-amino-acid chain: MKSDIQIAREAQKLPIAQIAGRLGLAEADFLPYGHDKAKIAHEAIAALAGRPQGRLILVTAINPTPAGEGKTTTTVGLGDALNRIGKRATVCIREASLGPNFGMKGGAAGGGHAQIVPMEDMNLHFTGDFHAVTSAHNLLAAMIDNHIHWGNALRIDPRRVTWRRVMDMNDRVLRQVVVALGGPANGVPRECGFDITVASEVMAILCLASDLADLQARLGRIVIGQTFDRRPVTAHDLGAEGAMTVLLRDALQPNLVQTLENNPALVHGGPFANIAHGCNSVMATRTALALSDYVVTEAGFGADLGAEKFLNIKCRLAGLQPAAAVLVATVRALKMNGGVARTDLGAENVAALRAGCANLGRHIQNLRRFGLPVVVAINHFSGDTEAEIAALADYCRERGVQAVLCRHWAEGGKGAEDLARAVVALAEGGADFTPLYPDEMPLAEKIETICHRIYGAGQVEFLPHIVERLEEWQAAGHGHLPVCMAKTQYSFSANPAALGAPEGFTIPVREVRLAAGAGFVVAICGDIMTMPGLPREPSALRIGVDADGHVQGLF.

65 to 72 (TPAGEGKT) is an ATP binding site.

It belongs to the formate--tetrahydrofolate ligase family.

The enzyme catalyses (6S)-5,6,7,8-tetrahydrofolate + formate + ATP = (6R)-10-formyltetrahydrofolate + ADP + phosphate. It participates in one-carbon metabolism; tetrahydrofolate interconversion. This is Formate--tetrahydrofolate ligase from Paracoccus denitrificans (strain Pd 1222).